The sequence spans 307 residues: Elongation factor Ts (307 aa).

Residues 80–83 (TDFV) are involved in Mg(2+) ion dislocation from EF-Tu.

Belongs to the EF-Ts family.

The protein resides in the cytoplasm. Its function is as follows. Associates with the EF-Tu.GDP complex and induces the exchange of GDP to GTP. It remains bound to the aminoacyl-tRNA.EF-Tu.GTP complex up to the GTP hydrolysis stage on the ribosome. The protein is Elongation factor Ts of Variovorax paradoxus (strain S110).